We begin with the raw amino-acid sequence, 40 residues long: Photosystem II reaction center protein J (40 aa).

A helical membrane pass occupies residues 8–28; the sequence is IPLWLIGTVTGIPVIGSIGIF.

This sequence belongs to the PsbJ family. In terms of assembly, PSII is composed of 1 copy each of membrane proteins PsbA, PsbB, PsbC, PsbD, PsbE, PsbF, PsbH, PsbI, PsbJ, PsbK, PsbL, PsbM, PsbT, PsbX, PsbY, PsbZ, Psb30/Ycf12, at least 3 peripheral proteins of the oxygen-evolving complex and a large number of cofactors. It forms dimeric complexes.

Its subcellular location is the plastid. It localises to the chloroplast thylakoid membrane. One of the components of the core complex of photosystem II (PSII). PSII is a light-driven water:plastoquinone oxidoreductase that uses light energy to abstract electrons from H(2)O, generating O(2) and a proton gradient subsequently used for ATP formation. It consists of a core antenna complex that captures photons, and an electron transfer chain that converts photonic excitation into a charge separation. The chain is Photosystem II reaction center protein J from Chloranthus spicatus (Chulantree).